A 955-amino-acid polypeptide reads, in one-letter code: Eukaryotic translation initiation factor 3 subunit C (955 aa).

2 disordered regions span residues M1–V22 and R157–W299. Residues D162–E183 are compositionally biased toward acidic residues. Residues V206–G218 are compositionally biased toward low complexity. The span at S219–D229 shows a compositional bias: acidic residues. A compositionally biased stretch (basic and acidic residues) spans E230–E250. Residues M288 to E297 show a composition bias toward acidic residues. The region spanning F658–P834 is the PCI domain. The segment at N865 to E955 is disordered. Residues Y882–N894 are compositionally biased toward low complexity. Positions G911 to E955 are enriched in basic and acidic residues.

Belongs to the eIF-3 subunit C family. Component of the eukaryotic translation initiation factor 3 (eIF-3) complex.

It localises to the cytoplasm. Component of the eukaryotic translation initiation factor 3 (eIF-3) complex, which is involved in protein synthesis of a specialized repertoire of mRNAs and, together with other initiation factors, stimulates binding of mRNA and methionyl-tRNAi to the 40S ribosome. The eIF-3 complex specifically targets and initiates translation of a subset of mRNAs involved in cell proliferation. The chain is Eukaryotic translation initiation factor 3 subunit C from Anopheles gambiae (African malaria mosquito).